The sequence spans 962 residues: Protease 3 (962 aa).

Positions 1-23 (MPRSIWFKALLLFVALWAPLSQA) are cleaved as a signal peptide. Residue H88 participates in Zn(2+) binding. Catalysis depends on E91, which acts as the Proton acceptor. Zn(2+)-binding residues include H92 and E169.

Belongs to the peptidase M16 family. In terms of assembly, monomer. The cofactor is Zn(2+).

It is found in the periplasm. The enzyme catalyses Preferential cleavage of 16-Tyr-|-Leu-17 and 25-Phe-|-Tyr-26 bonds of oxidized insulin B chain. Also acts on other substrates of Mw less than 7 kDa such as insulin and glucagon.. Endopeptidase that degrades small peptides of less than 7 kDa, such as glucagon and insulin. The sequence is that of Protease 3 (ptrA) from Escherichia coli O6:H1 (strain CFT073 / ATCC 700928 / UPEC).